Here is a 268-residue protein sequence, read N- to C-terminus: MSRLQTRFAQLKQDNRAALVTFVTAGDPDYDASLEILKGLPAAGADVIELGMPFTDPMADGPAIQLANIRALQGGQTLAKTLRMVREFRAGDSDTPLVLMGYFNPIHHYGVERFVTEAKEAGVDGLIVVDLPPEHNEDLCHPAQAAGIDFIRLTTPTTGDERLPTVLEGSSGFVYYVSVAGVTGANAATLEHVEEAVARLRRHTDLPIGIGFGIRSAEHAAAVARLADGVVVGSALIERIAKAGDTARAVKDVLALCGELAEGVRNAR.

Residues E49 and D60 each act as proton acceptor in the active site.

It belongs to the TrpA family. In terms of assembly, tetramer of two alpha and two beta chains.

The catalysed reaction is (1S,2R)-1-C-(indol-3-yl)glycerol 3-phosphate + L-serine = D-glyceraldehyde 3-phosphate + L-tryptophan + H2O. It participates in amino-acid biosynthesis; L-tryptophan biosynthesis; L-tryptophan from chorismate: step 5/5. In terms of biological role, the alpha subunit is responsible for the aldol cleavage of indoleglycerol phosphate to indole and glyceraldehyde 3-phosphate. This is Tryptophan synthase alpha chain from Pseudomonas paraeruginosa (strain DSM 24068 / PA7) (Pseudomonas aeruginosa (strain PA7)).